The following is a 431-amino-acid chain: Adenylosuccinate synthetase (431 aa).

GTP-binding positions include G12 to K18 and G40 to T42. The active-site Proton acceptor is D13. Mg(2+) is bound by residues D13 and G40. Residues D13–K16, N38–H41, T131, R145, Q225, T240, and R304 contribute to the IMP site. H41 acts as the Proton donor in catalysis. A substrate-binding site is contributed by T300–R306. GTP is bound by residues R306, K332 to D334, and S414 to S416.

It belongs to the adenylosuccinate synthetase family. As to quaternary structure, homodimer. Mg(2+) serves as cofactor.

Its subcellular location is the cytoplasm. It catalyses the reaction IMP + L-aspartate + GTP = N(6)-(1,2-dicarboxyethyl)-AMP + GDP + phosphate + 2 H(+). It functions in the pathway purine metabolism; AMP biosynthesis via de novo pathway; AMP from IMP: step 1/2. Its function is as follows. Plays an important role in the de novo pathway of purine nucleotide biosynthesis. Catalyzes the first committed step in the biosynthesis of AMP from IMP. The chain is Adenylosuccinate synthetase from Dinoroseobacter shibae (strain DSM 16493 / NCIMB 14021 / DFL 12).